A 393-amino-acid polypeptide reads, in one-letter code: Formate-dependent phosphoribosylglycinamide formyltransferase (393 aa).

N(1)-(5-phospho-beta-D-ribosyl)glycinamide-binding positions include 17-18 and Glu77; that span reads EL. Residues Arg109, Lys150, 155–160, 190–193, and Glu198 each bind ATP; these read SSGKGQ and EEFL. The region spanning 114 to 304 is the ATP-grasp domain; that stretch reads DLAAGELGLR…EFELHLRAVL (191 aa). Mg(2+)-binding residues include Glu263 and Glu275. N(1)-(5-phospho-beta-D-ribosyl)glycinamide-binding positions include Asp282, Lys354, and 361 to 362; that span reads RR.

The protein belongs to the PurK/PurT family. As to quaternary structure, homodimer.

The catalysed reaction is N(1)-(5-phospho-beta-D-ribosyl)glycinamide + formate + ATP = N(2)-formyl-N(1)-(5-phospho-beta-D-ribosyl)glycinamide + ADP + phosphate + H(+). It functions in the pathway purine metabolism; IMP biosynthesis via de novo pathway; N(2)-formyl-N(1)-(5-phospho-D-ribosyl)glycinamide from N(1)-(5-phospho-D-ribosyl)glycinamide (formate route): step 1/1. Its function is as follows. Involved in the de novo purine biosynthesis. Catalyzes the transfer of formate to 5-phospho-ribosyl-glycinamide (GAR), producing 5-phospho-ribosyl-N-formylglycinamide (FGAR). Formate is provided by PurU via hydrolysis of 10-formyl-tetrahydrofolate. This is Formate-dependent phosphoribosylglycinamide formyltransferase from Synechococcus sp. (strain RCC307).